Reading from the N-terminus, the 255-residue chain is Vitamin B12 import ATP-binding protein BtuD (255 aa).

Residues Met2–Gln240 form the ABC transporter domain. Position 30–37 (Gly30–Ser37) interacts with ATP.

It belongs to the ABC transporter superfamily. Vitamin B12 importer (TC 3.A.1.13.1) family. The complex is composed of two ATP-binding proteins (BtuD), two transmembrane proteins (BtuC) and a solute-binding protein (BtuF).

The protein resides in the cell inner membrane. The catalysed reaction is an R-cob(III)alamin(out) + ATP + H2O = an R-cob(III)alamin(in) + ADP + phosphate + H(+). Functionally, part of the ABC transporter complex BtuCDF involved in vitamin B12 import. Responsible for energy coupling to the transport system. In Vibrio parahaemolyticus serotype O3:K6 (strain RIMD 2210633), this protein is Vitamin B12 import ATP-binding protein BtuD.